Reading from the N-terminus, the 210-residue chain is Dephospho-CoA kinase (210 aa).

One can recognise a DPCK domain in the interval 18-210; the sequence is RIGITGGIAS…LSYPQVEVLL (193 aa). 26–31 provides a ligand contact to ATP; it reads ASGKTS.

This sequence belongs to the CoaE family.

It localises to the cytoplasm. It carries out the reaction 3'-dephospho-CoA + ATP = ADP + CoA + H(+). It functions in the pathway cofactor biosynthesis; coenzyme A biosynthesis; CoA from (R)-pantothenate: step 5/5. Catalyzes the phosphorylation of the 3'-hydroxyl group of dephosphocoenzyme A to form coenzyme A. The chain is Dephospho-CoA kinase from Prochlorococcus marinus (strain SARG / CCMP1375 / SS120).